Here is a 273-residue protein sequence, read N- to C-terminus: Putative phosphoenolpyruvate synthase regulatory protein (273 aa).

153–160 contacts ADP; the sequence is AVSRAGKT.

It belongs to the pyruvate, phosphate/water dikinase regulatory protein family. PSRP subfamily.

The enzyme catalyses [pyruvate, water dikinase] + ADP = [pyruvate, water dikinase]-phosphate + AMP + H(+). It catalyses the reaction [pyruvate, water dikinase]-phosphate + phosphate + H(+) = [pyruvate, water dikinase] + diphosphate. Functionally, bifunctional serine/threonine kinase and phosphorylase involved in the regulation of the phosphoenolpyruvate synthase (PEPS) by catalyzing its phosphorylation/dephosphorylation. This is Putative phosphoenolpyruvate synthase regulatory protein from Xylella fastidiosa (strain M23).